The sequence spans 274 residues: 4-deoxy-L-threo-5-hexosulose-uronate ketol-isomerase (274 aa).

Residues His-192, His-194, Glu-199, and His-241 each coordinate Zn(2+).

The protein belongs to the KduI family. Zn(2+) is required as a cofactor.

The enzyme catalyses 5-dehydro-4-deoxy-D-glucuronate = 3-deoxy-D-glycero-2,5-hexodiulosonate. The protein operates within glycan metabolism; pectin degradation; 2-dehydro-3-deoxy-D-gluconate from pectin: step 4/5. In terms of biological role, catalyzes the isomerization of 5-dehydro-4-deoxy-D-glucuronate to 3-deoxy-D-glycero-2,5-hexodiulosonate. The chain is 4-deoxy-L-threo-5-hexosulose-uronate ketol-isomerase from Shigella boydii serotype 18 (strain CDC 3083-94 / BS512).